A 366-amino-acid polypeptide reads, in one-letter code: Trans-enoyl reductase caaB (366 aa).

Residues 19 to 363 form the Enoyl reductase (ER) domain; it reads GAGQLSIYHD…RQTVSGHKLV (345 aa). Residue Tyr219 coordinates NADP(+).

It belongs to the zinc-containing alcohol dehydrogenase family. As to quaternary structure, monomer.

It functions in the pathway secondary metabolite biosynthesis. Trans-enoyl reductase; part of the gene cluster that produces the acyltetronic acid derivatives carlosic acid, agglomerin F and carlosic acid methyl ether. The PKS domains of caaA condenses two malonyl-CoAs into an acetyl starter unit, and form 1,3-diketohexanyl-ACP with the help of the trans-enoyl reductase caaB. Next, the C domain of caaA forms the ester bond between the acyl chain and L-malic acid (derived from the TCA cycle) and accepted by the A domain instead of an amino acid. Finally, the terminal reductase/Dieckmann cyclization (R/DKC) domain cyclizes the intermediate and releases the product as carlosic acid. Decarboxylation of carlosic acid followed by formation of the exocyclic double bond is likely to be catalyzed by the cytochrome P450 monooxygenase caaC. Thus, decarboxylation and oxidation would be coupled (performed by one enzyme) through concomitant abstraction of the hydrogen at C-4. Finally, sequential oxidations of the terminal C-10 methyl group to form carboxylic acid would be catalyzed by the 2-oxoglutarate-dependent dioxygenase caaD, which is required for the biosynthesis of agglomerin F. The sequence is that of Trans-enoyl reductase caaB from Aspergillus niger (strain ATCC MYA-4892 / CBS 513.88 / FGSC A1513).